Reading from the N-terminus, the 353-residue chain is Phospho-N-acetylmuramoyl-pentapeptide-transferase (353 aa).

10 consecutive transmembrane segments (helical) span residues 24–44, 66–86, 88–108, 129–149, 160–180, 192–212, 229–249, 256–276, 281–301, and 330–350; these read LGFF…ILWA, TPTM…VLCA, LSNL…FVGF, FGML…KGLD, PLFE…FLST, GLAS…VYVA, VGEL…FLWY, VFMG…NAIV, ILLV…ILQV, and KVIV…LLSL.

Belongs to the glycosyltransferase 4 family. MraY subfamily. Mg(2+) is required as a cofactor.

It is found in the cell inner membrane. The enzyme catalyses UDP-N-acetyl-alpha-D-muramoyl-L-alanyl-gamma-D-glutamyl-meso-2,6-diaminopimeloyl-D-alanyl-D-alanine + di-trans,octa-cis-undecaprenyl phosphate = di-trans,octa-cis-undecaprenyl diphospho-N-acetyl-alpha-D-muramoyl-L-alanyl-D-glutamyl-meso-2,6-diaminopimeloyl-D-alanyl-D-alanine + UMP. Its pathway is cell wall biogenesis; peptidoglycan biosynthesis. Its function is as follows. Catalyzes the initial step of the lipid cycle reactions in the biosynthesis of the cell wall peptidoglycan: transfers peptidoglycan precursor phospho-MurNAc-pentapeptide from UDP-MurNAc-pentapeptide onto the lipid carrier undecaprenyl phosphate, yielding undecaprenyl-pyrophosphoryl-MurNAc-pentapeptide, known as lipid I. This is Phospho-N-acetylmuramoyl-pentapeptide-transferase from Helicobacter pylori (strain J99 / ATCC 700824) (Campylobacter pylori J99).